Reading from the N-terminus, the 188-residue chain is Large ribosomal subunit protein uL22 (188 aa).

Positions 155 to 188 (STPEGAKKGKKKKGTKDAVEKSSKRVKTAATAAH) are disordered.

It belongs to the universal ribosomal protein uL22 family.

In Agriotes lineatus (Lined click beetle), this protein is Large ribosomal subunit protein uL22 (RpL17).